The primary structure comprises 225 residues: 7-cyano-7-deazaguanine synthase (225 aa).

An ATP-binding site is contributed by 7–17; that stretch reads LSGGMDSTTLL. Residues C183, C191, C194, and C197 each contribute to the Zn(2+) site.

Belongs to the QueC family. In terms of assembly, homodimer. Zn(2+) is required as a cofactor.

The enzyme catalyses 7-carboxy-7-deazaguanine + NH4(+) + ATP = 7-cyano-7-deazaguanine + ADP + phosphate + H2O + H(+). Its pathway is purine metabolism; 7-cyano-7-deazaguanine biosynthesis. Its function is as follows. Catalyzes the ATP-dependent conversion of 7-carboxy-7-deazaguanine (CDG) to 7-cyano-7-deazaguanine (preQ(0)). In Caldicellulosiruptor saccharolyticus (strain ATCC 43494 / DSM 8903 / Tp8T 6331), this protein is 7-cyano-7-deazaguanine synthase.